Here is a 452-residue protein sequence, read N- to C-terminus: Protein disulfide-isomerase TMX3 (452 aa).

The N-terminal stretch at 1 to 26 (MAAAGLCFILAIVSSTSLLASVPVSA) is a signal peptide. Positions 27–128 (LVEDLDDSFK…KEDIVEFANR (102 aa)) constitute a Thioredoxin domain. The Lumenal segment spans residues 27-375 (LVEDLDDSFK…TVVSVFKSSP (349 aa)). Active-site nucleophile residues include Cys53 and Cys56. The cysteines at positions 53 and 56 are disulfide-linked. 2 N-linked (GlcNAc...) asparagine glycosylation sites follow: Asn258 and Asn313. A helical transmembrane segment spans residues 376-396 (LLGCFLFGLPLGVISIMCYGI). Topologically, residues 397-452 (CTADTEDGSEEMTRKDVIDQNASDEGSDEEEEKGREITDVSDEDQQEKDFMEKKID) are cytoplasmic. The segment at 405 to 452 (SEEMTRKDVIDQNASDEGSDEEEEKGREITDVSDEDQQEKDFMEKKID) is disordered. The span at 443-452 (EKDFMEKKID) shows a compositional bias: basic and acidic residues. The Di-lysine motif motif lies at 449 to 452 (KKID).

This sequence belongs to the protein disulfide isomerase family.

Its subcellular location is the endoplasmic reticulum membrane. It catalyses the reaction Catalyzes the rearrangement of -S-S- bonds in proteins.. In terms of biological role, probable disulfide isomerase, which participates in the folding of proteins containing disulfide bonds. May act as a dithiol oxidase. Acts as a regulator of endoplasmic reticulum-mitochondria contact sites via its ability to regulate redox signals. This is Protein disulfide-isomerase TMX3 (tmx3) from Xenopus laevis (African clawed frog).